Reading from the N-terminus, the 414-residue chain is Lactosylceramide alpha-2,3-sialyltransferase (414 aa).

Residues 1 to 65 lie on the Cytoplasmic side of the membrane; that stretch reads MHTEAVGGAA…MRRPSLLIKD (65 aa). The chain crosses the membrane as a helical; Signal-anchor for type II membrane protein span at residues 66–86; that stretch reads ICKCTLVAFGVWLLYILILNY. Residues 87–414 are Lumenal-facing; the sequence is TAEECDMKRM…VVEDLSGGIH (328 aa). A disulfide bridge connects residues Cys194 and Cys352. 3 N-linked (GlcNAc...) asparagine glycosylation sites follow: Asn235, Asn279, and Asn389.

Belongs to the glycosyltransferase 29 family. In terms of tissue distribution, mainly expressed in brain, and then testis, heart and liver, almost all tissues showed some levels of the gene expression.

It localises to the golgi apparatus membrane. It catalyses the reaction a beta-D-Gal-(1-&gt;4)-beta-D-Glc-(1&lt;-&gt;1)-Cer(d18:1(4E)) + CMP-N-acetyl-beta-neuraminate = a ganglioside GM3 (d18:1(4E)) + CMP + H(+). It carries out the reaction ganglioside GA2 (d18:1(4E)/18:0) + CMP-N-acetyl-beta-neuraminate = ganglioside GM2 (d18:1(4E)/18:0) + CMP + H(+). The enzyme catalyses a beta-D-Gal-(1&lt;-&gt;1')-ceramide + CMP-N-acetyl-beta-neuraminate = N-acetyl-alpha-neuraminosyl-(2-&gt;3)-beta-D-galactosyl-(1&lt;-&gt;1')-ceramide + CMP + H(+). The catalysed reaction is ganglioside GA1 (d18:1(4E)/18:0) + CMP-N-acetyl-beta-neuraminate = ganglioside GM1 (d18:1(4E)/18:0) + CMP + H(+). Its function is as follows. (Microbial infection) Gangliosides GD1b and GT1b (derived from GM3) may serve as receptors for some C.botulinum neurotoxins (minimally types BoNT/A, B, C). Functionally, transfers the sialyl group (N-acetyl-alpha-neuraminyl or NeuAc) from CMP-NeuAc to the non-reducing terminal galactose (Gal) of glycosphingolipids forming gangliosides (important molecules involved in the regulation of multiple cellular processes, including cell proliferation and differentiation, apoptosis, embryogenesis, development, and oncogenesis). Mainly involved in the biosynthesis of ganglioside GM3 but can also use different glycolipids as substrate acceptors such as D-galactosylceramide (GalCer), asialo-GM2 (GA2) and asialo-GM1 (GA1), although less preferentially than beta-D-Gal-(1-&gt;4)-beta-D-Glc-(1&lt;-&gt;1)-Cer (LacCer). The protein is Lactosylceramide alpha-2,3-sialyltransferase (St3gal5) of Mus musculus (Mouse).